A 340-amino-acid chain; its full sequence is Ribonucleoside-diphosphate reductase subunit beta (340 aa).

The Fe cation site is built by Asp-88 and His-122. Tyr-126 is a catalytic residue. His-216 serves as a coordination point for Fe cation.

The protein belongs to the ribonucleoside diphosphate reductase small chain family. In terms of assembly, tetramer of two alpha and two beta subunits. Fe cation serves as cofactor.

It catalyses the reaction a 2'-deoxyribonucleoside 5'-diphosphate + [thioredoxin]-disulfide + H2O = a ribonucleoside 5'-diphosphate + [thioredoxin]-dithiol. In terms of biological role, provides the precursors necessary for DNA synthesis. Catalyzes the biosynthesis of deoxyribonucleotides from the corresponding ribonucleotides. This Mycoplasma genitalium (strain ATCC 33530 / DSM 19775 / NCTC 10195 / G37) (Mycoplasmoides genitalium) protein is Ribonucleoside-diphosphate reductase subunit beta (nrdF).